The sequence spans 346 residues: MKFAILFGGNSYEHEISIVSAVVLKKVINQNLEFIFCDEERRFYHIPSEKMNSKTFSTKAYKKEKELFIKQGGFFSKGFLKENKLECECVINLIHGRDGEDGKIAALFEFYSIKFIGPRLEASVLSFNKELTKLYAKSVGVKTLDYTMVRKGQNSKEKLSFPCIIKPARLGSSIGISIVKDEKDLEYAKDVGFEFDNDLVVEEFKNNIKEYNLAGCMINDEFVFSIIEEPKKKEFLDFEQKYLSFSGHNELIEANLSEELKEKLKDSFKKIYNPLFKGALIRCDFFILDNEIYLNEINPNPGSLANYLFKDFSTTLNALADQISLEKMIKISYNFLHSINGQKGKL.

The 195-residue stretch at 133-327 (KLYAKSVGVK…ALADQISLEK (195 aa)) folds into the ATP-grasp domain. 159 to 211 (LSFPCIIKPARLGSSIGISIVKDEKDLEYAKDVGFEFDNDLVVEEFKNNIKEY) contacts ATP. Mg(2+)-binding residues include D284, E296, and N298.

It belongs to the D-alanine--D-alanine ligase family. Mg(2+) is required as a cofactor. Requires Mn(2+) as cofactor.

The protein resides in the cytoplasm. It catalyses the reaction 2 D-alanine + ATP = D-alanyl-D-alanine + ADP + phosphate + H(+). The protein operates within cell wall biogenesis; peptidoglycan biosynthesis. Cell wall formation. The protein is D-alanine--D-alanine ligase of Campylobacter jejuni subsp. jejuni serotype O:23/36 (strain 81-176).